Consider the following 230-residue polypeptide: Cytidylate kinase (230 aa).

13–21 is a binding site for ATP; the sequence is GPAGTGKSS.

This sequence belongs to the cytidylate kinase family. Type 1 subfamily.

It localises to the cytoplasm. It carries out the reaction CMP + ATP = CDP + ADP. It catalyses the reaction dCMP + ATP = dCDP + ADP. This is Cytidylate kinase from Mycobacterium tuberculosis (strain ATCC 25177 / H37Ra).